The following is a 231-amino-acid chain: 5'-methylthioadenosine/S-adenosylhomocysteine nucleosidase (231 aa).

Glutamate 12 acts as the Proton acceptor in catalysis. Substrate is bound by residues glycine 78, valine 153, and 174–175; that span reads ME. Residue aspartate 198 is the Proton donor of the active site.

Belongs to the PNP/UDP phosphorylase family. MtnN subfamily.

It carries out the reaction S-adenosyl-L-homocysteine + H2O = S-(5-deoxy-D-ribos-5-yl)-L-homocysteine + adenine. The enzyme catalyses S-methyl-5'-thioadenosine + H2O = 5-(methylsulfanyl)-D-ribose + adenine. The catalysed reaction is 5'-deoxyadenosine + H2O = 5-deoxy-D-ribose + adenine. The protein operates within amino-acid biosynthesis; L-methionine biosynthesis via salvage pathway; S-methyl-5-thio-alpha-D-ribose 1-phosphate from S-methyl-5'-thioadenosine (hydrolase route): step 1/2. Functionally, catalyzes the irreversible cleavage of the glycosidic bond in both 5'-methylthioadenosine (MTA) and S-adenosylhomocysteine (SAH/AdoHcy) to adenine and the corresponding thioribose, 5'-methylthioribose and S-ribosylhomocysteine, respectively. Also cleaves 5'-deoxyadenosine, a toxic by-product of radical S-adenosylmethionine (SAM) enzymes, into 5-deoxyribose and adenine. The polypeptide is 5'-methylthioadenosine/S-adenosylhomocysteine nucleosidase (Aliivibrio fischeri (strain MJ11) (Vibrio fischeri)).